The chain runs to 159 residues: Capsid protein (159 aa).

Belongs to the virgaviridae capsid protein family.

Its subcellular location is the virion. Functionally, capsid protein self-assembles to form rod-shaped virions about 18 nm in diameter with a central canal enclosing the viral genomic RNA. The polypeptide is Capsid protein (CP) (Tomato mosaic virus (strain Kazakh K1) (ToMV)).